Consider the following 420-residue polypeptide: Glycerol-3-phosphate dehydrogenase [NAD(+)] (420 aa).

Residues G16–G21, F48, and F119 contribute to the NAD(+) site. K142 is a binding site for substrate. Position 175 (A175) interacts with NAD(+). Residues Y190–L217 form a disordered region. The segment covering R199–N210 has biased composition (polar residues). K278 functions as the Proton acceptor in the catalytic mechanism. Residues R344 and Q373 each coordinate NAD(+). R344 to N345 is a binding site for substrate.

The protein belongs to the NAD-dependent glycerol-3-phosphate dehydrogenase family.

The enzyme catalyses sn-glycerol 3-phosphate + NAD(+) = dihydroxyacetone phosphate + NADH + H(+). This Colletotrichum gloeosporioides (Anthracnose fungus) protein is Glycerol-3-phosphate dehydrogenase [NAD(+)].